Consider the following 169-residue polypeptide: Endoribonuclease YbeY (169 aa).

Residues H128, H132, and H138 each coordinate Zn(2+).

This sequence belongs to the endoribonuclease YbeY family. It depends on Zn(2+) as a cofactor.

The protein localises to the cytoplasm. In terms of biological role, single strand-specific metallo-endoribonuclease involved in late-stage 70S ribosome quality control and in maturation of the 3' terminus of the 16S rRNA. In Rhizorhabdus wittichii (strain DSM 6014 / CCUG 31198 / JCM 15750 / NBRC 105917 / EY 4224 / RW1) (Sphingomonas wittichii), this protein is Endoribonuclease YbeY.